The primary structure comprises 200 residues: Large ribosomal subunit protein uL4 (200 aa).

The disordered stretch occupies residues 38-80 (GRQGSKQQKTRSDVSGGGKRPWRQKGTGRARAGTTRGPIWRGG).

This sequence belongs to the universal ribosomal protein uL4 family. As to quaternary structure, part of the 50S ribosomal subunit.

Functionally, one of the primary rRNA binding proteins, this protein initially binds near the 5'-end of the 23S rRNA. It is important during the early stages of 50S assembly. It makes multiple contacts with different domains of the 23S rRNA in the assembled 50S subunit and ribosome. In terms of biological role, forms part of the polypeptide exit tunnel. This Stutzerimonas stutzeri (strain A1501) (Pseudomonas stutzeri) protein is Large ribosomal subunit protein uL4.